The chain runs to 433 residues: Glutamyl-tRNA reductase (433 aa).

Residues 49–52, Ser114, 119–121, and Gln125 contribute to the substrate site; these read TCNR and EPQ. Cys50 acts as the Nucleophile in catalysis. Residue 201-206 participates in NADP(+) binding; sequence GAGETI.

This sequence belongs to the glutamyl-tRNA reductase family. Homodimer.

It carries out the reaction (S)-4-amino-5-oxopentanoate + tRNA(Glu) + NADP(+) = L-glutamyl-tRNA(Glu) + NADPH + H(+). Its pathway is porphyrin-containing compound metabolism; protoporphyrin-IX biosynthesis; 5-aminolevulinate from L-glutamyl-tRNA(Glu): step 1/2. Catalyzes the NADPH-dependent reduction of glutamyl-tRNA(Glu) to glutamate 1-semialdehyde (GSA). The chain is Glutamyl-tRNA reductase from Histophilus somni (strain 2336) (Haemophilus somnus).